The following is a 139-amino-acid chain: Small integral membrane protein 34 (139 aa).

A helical transmembrane segment spans residues 46–66 (GTSAAWYILTIIGIYAVIFVF).

The protein resides in the membrane. The sequence is that of Small integral membrane protein 34 from Homo sapiens (Human).